Reading from the N-terminus, the 397-residue chain is MPATEYQRSFGRSFLNLRRDTAVNSVESTTVTPELTQMEAELVSFQRKVAERFIDLNASSCEDLLSLEWVGKLLDSFLSCQEEFRSIVINHRSMITKPPMDRLVSDYFERSVKALDVCNAIRDGVEQIRQWQKLIEIVICAFNNNGGGSSGKRPLGEGQFRRARKTLIELAIGMLDEKDSSSSSVSSQHRNRSFGRNKEQLHHRTIGHFRSLSWSVSRSWSASKQLQAIGNNLATPRASDITATNGLIVPVYTMTTVLLFVMWALVAAIPCQDRGLQVHFNVPRNYQWGGSLMSLHDRIIEESKKRERKNTCGLLKEIHQFEKTSRLMNELVDSVQFPLSEEKEMEVRERVEELGKLQEALKNGLDPFERKVREVFHRIVRSRTEGLDTVGKHHGSE.

Residues 247 to 267 form a helical membrane-spanning segment; that stretch reads LIVPVYTMTTVLLFVMWALVA.

This sequence belongs to the ROH1 family. In terms of assembly, interacts with EXO70C2. As to expression, mostly expressed in mature pollen.

The protein resides in the membrane. The protein localises to the cytoplasm. It is found in the cytosol. Functionally, involved in the regulation of plant growth, and modulates pollen development to ensure male fertility. May also affect the composition of the inner seed coat mucilage layer. This chain is Protein ROH1D, found in Arabidopsis thaliana (Mouse-ear cress).